The sequence spans 776 residues: Protein SEY1 (776 aa).

Residues 1–681 (MADRSAIQLI…KRSIITTRTH (681 aa)) are Cytoplasmic-facing. Residues 34-263 (GLDYHVISVF…TENYYFKPQY (230 aa)) form the GB1/RHD3-type G domain. GTP is bound at residue 44 to 51 (GSQSSGKS). A helical membrane pass occupies residues 682–702 (IPPWIYVLLAVLGWNEFVAVI). Topologically, residues 703-705 (RNP) are lumenal. Residues 706-726 (LFVTLTLILGATFFVIHKFGL) traverse the membrane as a helical segment. Topologically, residues 727-776 (WGPVVNVVQSAVGETRTAIKDKLRQFVVEDHEVKESFEMKDFSKNEQKEK) are cytoplasmic.

The protein belongs to the TRAFAC class dynamin-like GTPase superfamily. GB1/RHD3 GTPase family. RHD3 subfamily. As to quaternary structure, interacts with RTN1 and YOP1; GTP binding is not required for these interactions.

The protein localises to the endoplasmic reticulum membrane. In terms of biological role, cooperates with the reticulon proteins RTN1 and RTN2 and the tubule-shaping DP1 family protein YOP1 to generate and maintain the structure of the tubular endoplasmic reticulum network. Has GTPase activity, which is required for its function in ER organization. This Saccharomyces cerevisiae (strain AWRI1631) (Baker's yeast) protein is Protein SEY1.